The primary structure comprises 488 residues: 3-octaprenyl-4-hydroxybenzoate carboxy-lyase (488 aa).

Asn172 lines the Mn(2+) pocket. Prenylated FMN-binding positions include 175–177 (IYR), 189–191 (RWL), and 194–195 (RG). Glu238 serves as a coordination point for Mn(2+). The Proton donor role is filled by Asp287.

It belongs to the UbiD family. In terms of assembly, homohexamer. The cofactor is prenylated FMN. Mn(2+) is required as a cofactor.

It localises to the cell membrane. The enzyme catalyses a 4-hydroxy-3-(all-trans-polyprenyl)benzoate + H(+) = a 2-(all-trans-polyprenyl)phenol + CO2. Its pathway is cofactor biosynthesis; ubiquinone biosynthesis. Its function is as follows. Catalyzes the decarboxylation of 3-octaprenyl-4-hydroxy benzoate to 2-octaprenylphenol, an intermediate step in ubiquinone biosynthesis. The polypeptide is 3-octaprenyl-4-hydroxybenzoate carboxy-lyase (Alkalilimnicola ehrlichii (strain ATCC BAA-1101 / DSM 17681 / MLHE-1)).